The sequence spans 125 residues: Ribosome-binding factor A (125 aa).

Belongs to the RbfA family. As to quaternary structure, monomer. Binds 30S ribosomal subunits, but not 50S ribosomal subunits or 70S ribosomes.

Its subcellular location is the cytoplasm. One of several proteins that assist in the late maturation steps of the functional core of the 30S ribosomal subunit. Associates with free 30S ribosomal subunits (but not with 30S subunits that are part of 70S ribosomes or polysomes). Required for efficient processing of 16S rRNA. May interact with the 5'-terminal helix region of 16S rRNA. The sequence is that of Ribosome-binding factor A from Thermosipho melanesiensis (strain DSM 12029 / CIP 104789 / BI429).